The sequence spans 453 residues: tRNA modification GTPase MnmE (453 aa).

3 residues coordinate (6S)-5-formyl-5,6,7,8-tetrahydrofolate: Arg-22, Glu-79, and Lys-119. One can recognise a TrmE-type G domain in the interval 215 to 376 (GMKVVIAGRP…LRNHLKECMG (162 aa)). A K(+)-binding site is contributed by Asn-225. GTP-binding positions include 225–230 (NAGKSS), 244–250 (TDIAGTT), 269–272 (DTAG), and 334–337 (NKAD). Ser-229 contributes to the Mg(2+) binding site. 3 residues coordinate K(+): Thr-244, Ile-246, and Thr-249. Thr-250 contacts Mg(2+). Lys-453 serves as a coordination point for (6S)-5-formyl-5,6,7,8-tetrahydrofolate.

The protein belongs to the TRAFAC class TrmE-Era-EngA-EngB-Septin-like GTPase superfamily. TrmE GTPase family. As to quaternary structure, homodimer. Heterotetramer of two MnmE and two MnmG subunits. K(+) serves as cofactor.

The protein resides in the cytoplasm. Functionally, exhibits a very high intrinsic GTPase hydrolysis rate. Involved in the addition of a carboxymethylaminomethyl (cmnm) group at the wobble position (U34) of certain tRNAs, forming tRNA-cmnm(5)s(2)U34. The chain is tRNA modification GTPase MnmE from Vibrio vulnificus (strain YJ016).